Consider the following 171-residue polypeptide: uncharacterized protein (171 aa).

It to A.aeolicus aq_616.

This is an uncharacterized protein from Aquifex aeolicus (strain VF5).